A 91-amino-acid chain; its full sequence is UPF0223 protein SAR1071 (91 aa).

The protein belongs to the UPF0223 family.

The protein is UPF0223 protein SAR1071 of Staphylococcus aureus (strain MRSA252).